We begin with the raw amino-acid sequence, 458 residues long: Bifunctional protein GlmU (458 aa).

The interval 1–229 (MNKFAIVLAA…FDESLGVNDR (229 aa)) is pyrophosphorylase. Residues 8 to 11 (LAAG), Lys-22, Gln-72, and 77 to 78 (GT) each bind UDP-N-acetyl-alpha-D-glucosamine. Residue Asp-102 participates in Mg(2+) binding. UDP-N-acetyl-alpha-D-glucosamine is bound by residues Gly-139, Glu-154, Asn-169, and Asn-227. Asn-227 contacts Mg(2+). Residues 230–250 (VALSQAEATMRKRINHEHMVN) form a linker region. The interval 251 to 458 (GVTLIDPATT…AKKMPHYRGQ (208 aa)) is N-acetyltransferase. Residues Arg-332 and Lys-350 each contribute to the UDP-N-acetyl-alpha-D-glucosamine site. Catalysis depends on His-362, which acts as the Proton acceptor. Residues Tyr-365 and Asn-376 each contribute to the UDP-N-acetyl-alpha-D-glucosamine site. Acetyl-CoA is bound by residues Ala-379, Ser-404, Ala-422, and Arg-439.

The protein in the N-terminal section; belongs to the N-acetylglucosamine-1-phosphate uridyltransferase family. It in the C-terminal section; belongs to the transferase hexapeptide repeat family. In terms of assembly, homotrimer. Mg(2+) is required as a cofactor.

The protein resides in the cytoplasm. It carries out the reaction alpha-D-glucosamine 1-phosphate + acetyl-CoA = N-acetyl-alpha-D-glucosamine 1-phosphate + CoA + H(+). The enzyme catalyses N-acetyl-alpha-D-glucosamine 1-phosphate + UTP + H(+) = UDP-N-acetyl-alpha-D-glucosamine + diphosphate. Its pathway is nucleotide-sugar biosynthesis; UDP-N-acetyl-alpha-D-glucosamine biosynthesis; N-acetyl-alpha-D-glucosamine 1-phosphate from alpha-D-glucosamine 6-phosphate (route II): step 2/2. It participates in nucleotide-sugar biosynthesis; UDP-N-acetyl-alpha-D-glucosamine biosynthesis; UDP-N-acetyl-alpha-D-glucosamine from N-acetyl-alpha-D-glucosamine 1-phosphate: step 1/1. The protein operates within bacterial outer membrane biogenesis; LPS lipid A biosynthesis. In terms of biological role, catalyzes the last two sequential reactions in the de novo biosynthetic pathway for UDP-N-acetylglucosamine (UDP-GlcNAc). The C-terminal domain catalyzes the transfer of acetyl group from acetyl coenzyme A to glucosamine-1-phosphate (GlcN-1-P) to produce N-acetylglucosamine-1-phosphate (GlcNAc-1-P), which is converted into UDP-GlcNAc by the transfer of uridine 5-monophosphate (from uridine 5-triphosphate), a reaction catalyzed by the N-terminal domain. The chain is Bifunctional protein GlmU from Lactococcus lactis subsp. cremoris (strain MG1363).